The primary structure comprises 175 residues: Sec-independent protein translocase protein TatB (175 aa).

The helical transmembrane segment at 1–21 threads the bilayer; sequence MLDLGLTKMALIGVVALVVLG. Disordered regions lie at residues 104–132 and 155–175; these read GGAL…RKNW and SGAA…TRFF.

The protein belongs to the TatB family. In terms of assembly, the Tat system comprises two distinct complexes: a TatABC complex, containing multiple copies of TatA, TatB and TatC subunits, and a separate TatA complex, containing only TatA subunits. Substrates initially bind to the TatABC complex, which probably triggers association of the separate TatA complex to form the active translocon.

It localises to the cell inner membrane. In terms of biological role, part of the twin-arginine translocation (Tat) system that transports large folded proteins containing a characteristic twin-arginine motif in their signal peptide across membranes. Together with TatC, TatB is part of a receptor directly interacting with Tat signal peptides. TatB may form an oligomeric binding site that transiently accommodates folded Tat precursor proteins before their translocation. The chain is Sec-independent protein translocase protein TatB from Paraburkholderia xenovorans (strain LB400).